The following is an 899-amino-acid chain: Alanine--tRNA ligase, chloroplastic/mitochondrial (899 aa).

Histidine 581, histidine 585, cysteine 683, and histidine 687 together coordinate Zn(2+).

The protein belongs to the class-II aminoacyl-tRNA synthetase family. As to quaternary structure, monomer. Zn(2+) serves as cofactor.

It localises to the plastid. The protein localises to the chloroplast. Its subcellular location is the mitochondrion. It catalyses the reaction tRNA(Ala) + L-alanine + ATP = L-alanyl-tRNA(Ala) + AMP + diphosphate. In terms of biological role, catalyzes the attachment of alanine to tRNA(Ala) in a two-step reaction: alanine is first activated by ATP to form Ala-AMP and then transferred to the acceptor end of tRNA(Ala). Also edits incorrectly charged tRNA(Ala) via its editing domain. The sequence is that of Alanine--tRNA ligase, chloroplastic/mitochondrial from Micromonas pusilla (strain CCMP1545) (Picoplanktonic green alga).